Reading from the N-terminus, the 420-residue chain is Mitogen-activated protein kinase HOG2 (420 aa).

Residues 29 to 37 (VGMGAFGLV) and K52 contribute to the ATP site. The active-site Proton acceptor is the D144. At T174 the chain carries Phosphothreonine. The TXY motif lies at 174-176 (TGY). The residue at position 176 (Y176) is a Phosphotyrosine. Positions 372–394 (AQHHHQTQQQSSGKHTNPTTSSS) are disordered.

This sequence belongs to the protein kinase superfamily. Ser/Thr protein kinase family. MAP kinase subfamily. HOG1 sub-subfamily. Mg(2+) is required as a cofactor. Dually phosphorylated on Thr-174 and Tyr-176, which activates the enzyme.

It localises to the cytoplasm. The protein resides in the nucleus. The enzyme catalyses L-seryl-[protein] + ATP = O-phospho-L-seryl-[protein] + ADP + H(+). It carries out the reaction L-threonyl-[protein] + ATP = O-phospho-L-threonyl-[protein] + ADP + H(+). With respect to regulation, activated by tyrosine and threonine phosphorylation. Mitogen-activated protein kinase involved in a signal transduction pathway that is activated by changes in the osmolarity of the extracellular environment. Controls osmotic regulation of transcription of target genes. The sequence is that of Mitogen-activated protein kinase HOG2 (HOG2) from Zygosaccharomyces rouxii.